The sequence spans 385 residues: Dual-specificity RNA methyltransferase RlmN (385 aa).

E113 serves as the catalytic Proton acceptor. The region spanning 120-352 (VGRAGALCVS…NRAGYASPIR (233 aa)) is the Radical SAM core domain. C127 and C363 are joined by a disulfide. C134, C138, and C141 together coordinate [4Fe-4S] cluster. Residues 189–190 (GE), S221, 243–245 (SLH), and N320 each bind S-adenosyl-L-methionine. C363 (S-methylcysteine intermediate) is an active-site residue.

The protein belongs to the radical SAM superfamily. RlmN family. Requires [4Fe-4S] cluster as cofactor.

Its subcellular location is the cytoplasm. It catalyses the reaction adenosine(2503) in 23S rRNA + 2 reduced [2Fe-2S]-[ferredoxin] + 2 S-adenosyl-L-methionine = 2-methyladenosine(2503) in 23S rRNA + 5'-deoxyadenosine + L-methionine + 2 oxidized [2Fe-2S]-[ferredoxin] + S-adenosyl-L-homocysteine. The catalysed reaction is adenosine(37) in tRNA + 2 reduced [2Fe-2S]-[ferredoxin] + 2 S-adenosyl-L-methionine = 2-methyladenosine(37) in tRNA + 5'-deoxyadenosine + L-methionine + 2 oxidized [2Fe-2S]-[ferredoxin] + S-adenosyl-L-homocysteine. Its function is as follows. Specifically methylates position 2 of adenine 2503 in 23S rRNA and position 2 of adenine 37 in tRNAs. m2A2503 modification seems to play a crucial role in the proofreading step occurring at the peptidyl transferase center and thus would serve to optimize ribosomal fidelity. The sequence is that of Dual-specificity RNA methyltransferase RlmN from Phenylobacterium zucineum (strain HLK1).